We begin with the raw amino-acid sequence, 84 residues long: MKLLYLFLAILLVIEEPVISGKRYILRCMGNSGICRASCKRNEQPYLYCKNYQSCCLQSYMRISISGKEENTDWSYEKQWPKLP.

An N-terminal signal peptide occupies residues 1-21; that stretch reads MKLLYLFLAILLVIEEPVISG. Intrachain disulfides connect Cys28–Cys55, Cys35–Cys49, and Cys39–Cys56.

It belongs to the beta-defensin family.

The protein localises to the secreted. Functionally, has antibacterial activity. This chain is Beta-defensin 119 (DEFB119), found in Pongo pygmaeus (Bornean orangutan).